The sequence spans 100 residues: Large ribosomal subunit protein uL23 (100 aa).

This sequence belongs to the universal ribosomal protein uL23 family. In terms of assembly, part of the 50S ribosomal subunit. Contacts protein L29, and trigger factor when it is bound to the ribosome.

Functionally, one of the early assembly proteins it binds 23S rRNA. One of the proteins that surrounds the polypeptide exit tunnel on the outside of the ribosome. Forms the main docking site for trigger factor binding to the ribosome. In Prochlorococcus marinus (strain MIT 9515), this protein is Large ribosomal subunit protein uL23.